The following is a 411-amino-acid chain: Nuclear receptor subfamily 2 group F member 1-A (411 aa).

Residues 1–68 (MAMVVSVWRD…AGDKGSQNSG (68 aa)) are disordered. Low complexity predominate over residues 24–46 (NPAAQPAREQQQAASAAPHTPQT). A DNA-binding region (nuclear receptor) is located at residues 73–148 (HIECVVCGDK…VGMRREAVQR (76 aa)). NR C4-type zinc fingers lie at residues 76–96 (CVVC…CEGC) and 112–136 (CRAN…LKKC). The region spanning 174–400 (YLSGYISLLL…TLIRDMLLSG (227 aa)) is the NR LBD domain.

This sequence belongs to the nuclear hormone receptor family. NR2 subfamily. As to expression, first expressed in 11-12 hour embryos. In the rostral brain of 13 hour embryos, expressed within the anterior half of the midbrain and the posterior part of the diencephalon. In the presumptive hindbrain, expressed in a segment-like stripe in the anterior region, resembling the presumptive rhombomere units of the hindbrain. Also detected in the intermediate mesoderm, posterior to the first somite. As somitogenesis proceeds, expression extends posteriorly and flanks the 10 most anterior somites. Expression changes extensively both in level and expansion of domains between 13 and 20 hours. In the rostral brain, expression extends to include a major part of the diencephalon and a caudal portion of the telencephalon. Within the hindbrain, strongly expressed in the two most anterior rhombomeres, and a lower but uniform expression is seen to extend throughout rhombomere 7. In 28 hour embryos, higher and more uniform expression is seen in both rostral and hindbrain areas. Also expressed in the retina of the eye.

The protein resides in the nucleus. Functionally, putative transcription factor that is required in photoreceptor cells precursors during eye development. This chain is Nuclear receptor subfamily 2 group F member 1-A (nr2f1a), found in Danio rerio (Zebrafish).